The following is a 481-amino-acid chain: Pyruvate kinase (481 aa).

Arg-33 is a binding site for substrate. Asn-35, Ser-37, Asp-67, and Thr-68 together coordinate K(+). Residue 35 to 38 (NFSH) participates in ATP binding. Arg-74 and Lys-155 together coordinate ATP. Mg(2+) is bound at residue Glu-221. Gly-244, Asp-245, and Thr-277 together coordinate substrate. Asp-245 is a binding site for Mg(2+).

This sequence belongs to the pyruvate kinase family. As to quaternary structure, homotetramer. Mg(2+) serves as cofactor. K(+) is required as a cofactor.

The enzyme catalyses pyruvate + ATP = phosphoenolpyruvate + ADP + H(+). It functions in the pathway carbohydrate degradation; glycolysis; pyruvate from D-glyceraldehyde 3-phosphate: step 5/5. This is Pyruvate kinase (pyk) from Chlamydia muridarum (strain MoPn / Nigg).